The sequence spans 410 residues: Cytochrome P450 monooxygenase mpsF (410 aa).

Cysteine 355 contacts heme.

It belongs to the cytochrome P450 family. It depends on heme as a cofactor.

The protein operates within secondary metabolite biosynthesis. Functionally, cytochrome P450 monooxygenase; part of the gene cluster that mediates the biosynthesis of macrophasetins, 3-decalinoyltetramic acids (DTAs) which feature a tetramate (pyrrolidine-2,4-dione) unit connected to a decalin fragment and that have potent bioactivities. The PKS-NRPS mpsA together with its associated enoylreductase partner mpsG incorporate one unit of acetyl-CoA, seven units of malonyl-CoA, and one unit of L-alanine to assemble the linear tetramic acid intermediate corresponding to the backbone of macrophasetins. Without the Diels-Alderase mpsD, the mpsA/G product can undergo the non-enzymatic intramolecular Diels-Alder (IMDA) reaction to generate both macrophasetin A and macrophasetin B. Catalyzed by mpsD, the linear tetramic acid intermediate is thoroughly converted to macrophasetin A via the endo-IMDA reaction in a regioselective and stereoselective manner. Finally, the cytochrome P450 monooxygenase mpsF catalyzes the hydroxylation at C20 to yield the end product macrophasetin C. The sequence is that of Cytochrome P450 monooxygenase mpsF from Macrophomina phaseolina (strain MS6) (Charcoal rot fungus).